A 424-amino-acid chain; its full sequence is UPF0415 protein C7orf25 homolog (424 aa).

This sequence belongs to the UPF0415 family.

The sequence is that of UPF0415 protein C7orf25 homolog from Xenopus laevis (African clawed frog).